A 490-amino-acid chain; its full sequence is Malonyl-[acyl-carrier protein] O-methyltransferase (490 aa).

The unknown stretch occupies residues Met-1–Gln-248. The malonyl-CoA O-methyltransferase stretch occupies residues Arg-249–Arg-490.

Belongs to the methyltransferase superfamily.

It catalyses the reaction malonyl-[ACP] + S-adenosyl-L-methionine = malonyl-[ACP] methyl ester + S-adenosyl-L-homocysteine. Its pathway is cofactor biosynthesis; biotin biosynthesis. In terms of biological role, converts the free carboxyl group of a malonyl-thioester to its methyl ester by transfer of a methyl group from S-adenosyl-L-methionine (SAM). It allows to synthesize pimeloyl-ACP via the fatty acid synthetic pathway. The chain is Malonyl-[acyl-carrier protein] O-methyltransferase (bioC) from Bacteroides fragilis (strain 638R).